Reading from the N-terminus, the 461-residue chain is ADP-specific phosphofructokinase (461 aa).

The region spanning 1-457 (MVRELLEKAR…FTSYLAMLKE (457 aa)) is the ADPK domain. Glu268, Glu298, and Asp441 together coordinate Mg(2+). The Proton acceptor role is filled by Asp441.

This sequence belongs to the carbohydrate kinase PfkC family. Requires Mg(2+) as cofactor.

It localises to the cytoplasm. It carries out the reaction beta-D-fructose 6-phosphate + ADP = beta-D-fructose 1,6-bisphosphate + AMP + H(+). It participates in carbohydrate degradation; glycolysis. In terms of biological role, catalyzes the phosphorylation of fructose 6-phosphate to fructose 1,6-bisphosphate using ADP as the phosphate donor. The chain is ADP-specific phosphofructokinase from Thermococcus kodakarensis (strain ATCC BAA-918 / JCM 12380 / KOD1) (Pyrococcus kodakaraensis (strain KOD1)).